The primary structure comprises 308 residues: Mitochondrial import receptor subunit TOM40B (308 aa).

Residues 1 to 29 form a disordered region; that stretch reads MGNTLGLAPMGTLPRRSHRREEPLPNPGS. The required for mitochondrial targeting stretch occupies residues 281–308; sequence PLPVTLALGAFLNHWRNRFHCGFSITVG.

This sequence belongs to the Tom40 family. As to quaternary structure, forms part of the preprotein translocase of the outer mitochondrial membrane (TOM complex) containing TOMM22, TOMM40, TOMM40L and TOMM70. Interacts with mitochondrial targeting sequences.

Its subcellular location is the mitochondrion outer membrane. In terms of biological role, potential channel-forming protein implicated in import of protein precursors into mitochondria. The polypeptide is Mitochondrial import receptor subunit TOM40B (Tomm40l) (Mus musculus (Mouse)).